The chain runs to 439 residues: Enolase 1 (439 aa).

Substrate is bound by residues His-160 and Glu-169. Residue Glu-212 is the Proton donor of the active site. Asp-247, Glu-296, and Asp-323 together coordinate Mg(2+). Substrate contacts are provided by Glu-296 and Asp-323. Lys-348 serves as the catalytic Proton acceptor. Residues 375-378 (SHRS) and Lys-399 contribute to the substrate site.

It belongs to the enolase family. Homodimer. It depends on Mg(2+) as a cofactor.

It localises to the cytoplasm. The catalysed reaction is (2R)-2-phosphoglycerate = phosphoenolpyruvate + H2O. It functions in the pathway carbohydrate degradation; glycolysis; pyruvate from D-glyceraldehyde 3-phosphate: step 4/5. In Debaryomyces hansenii (strain ATCC 36239 / CBS 767 / BCRC 21394 / JCM 1990 / NBRC 0083 / IGC 2968) (Yeast), this protein is Enolase 1 (ENO1).